The chain runs to 171 residues: 6,7-dimethyl-8-ribityllumazine synthase (171 aa).

5-amino-6-(D-ribitylamino)uracil-binding positions include Phe-30, 64-66, and 88-90; these read ALE and AVI. 93 to 94 contacts (2S)-2-hydroxy-3-oxobutyl phosphate; the sequence is ET. The active-site Proton donor is His-96. Asn-121 serves as a coordination point for 5-amino-6-(D-ribitylamino)uracil. Residue Arg-135 coordinates (2S)-2-hydroxy-3-oxobutyl phosphate.

Belongs to the DMRL synthase family.

The enzyme catalyses (2S)-2-hydroxy-3-oxobutyl phosphate + 5-amino-6-(D-ribitylamino)uracil = 6,7-dimethyl-8-(1-D-ribityl)lumazine + phosphate + 2 H2O + H(+). It participates in cofactor biosynthesis; riboflavin biosynthesis; riboflavin from 2-hydroxy-3-oxobutyl phosphate and 5-amino-6-(D-ribitylamino)uracil: step 1/2. Catalyzes the formation of 6,7-dimethyl-8-ribityllumazine by condensation of 5-amino-6-(D-ribitylamino)uracil with 3,4-dihydroxy-2-butanone 4-phosphate. This is the penultimate step in the biosynthesis of riboflavin. The polypeptide is 6,7-dimethyl-8-ribityllumazine synthase (Polynucleobacter necessarius subsp. necessarius (strain STIR1)).